The chain runs to 394 residues: Ribulose bisphosphate carboxylase large chain (394 aa).

An N6,N6,N6-trimethyllysine modification is found at Lys5. Positions 114 and 164 each coordinate substrate. Lys166 acts as the Proton acceptor in catalysis. Lys168 lines the substrate pocket. 3 residues coordinate Mg(2+): Lys192, Asp194, and Glu195. Lys192 bears the N6-carboxylysine mark. His285 (proton acceptor) is an active-site residue. Residues Arg286, His318, and Ser370 each contribute to the substrate site.

The protein belongs to the RuBisCO large chain family. Type I subfamily. Heterohexadecamer of 8 large chains and 8 small chains. Requires Mg(2+) as cofactor.

The protein localises to the plastid. Its subcellular location is the chloroplast. The catalysed reaction is 2 (2R)-3-phosphoglycerate + 2 H(+) = D-ribulose 1,5-bisphosphate + CO2 + H2O. The enzyme catalyses D-ribulose 1,5-bisphosphate + O2 = 2-phosphoglycolate + (2R)-3-phosphoglycerate + 2 H(+). RuBisCO catalyzes two reactions: the carboxylation of D-ribulose 1,5-bisphosphate, the primary event in carbon dioxide fixation, as well as the oxidative fragmentation of the pentose substrate in the photorespiration process. Both reactions occur simultaneously and in competition at the same active site. The sequence is that of Ribulose bisphosphate carboxylase large chain (rbcL) from Barclaya longifolia (Orchid lily).